A 346-amino-acid polypeptide reads, in one-letter code: Aspartate-semialdehyde dehydrogenase (346 aa).

Residues Ser-12–Val-15 and Arg-40–Ser-41 each bind NADP(+). Residue Arg-101 participates in phosphate binding. Cys-131 acts as the Acyl-thioester intermediate in catalysis. Gln-158 lines the substrate pocket. Ser-161–Gly-162 is an NADP(+) binding site. Lys-225 contacts phosphate. Residue Arg-246 coordinates substrate. His-253 serves as the catalytic Proton acceptor. Gln-326 serves as a coordination point for NADP(+).

It belongs to the aspartate-semialdehyde dehydrogenase family. In terms of assembly, homodimer.

The catalysed reaction is L-aspartate 4-semialdehyde + phosphate + NADP(+) = 4-phospho-L-aspartate + NADPH + H(+). It functions in the pathway amino-acid biosynthesis; L-lysine biosynthesis via DAP pathway; (S)-tetrahydrodipicolinate from L-aspartate: step 2/4. It participates in amino-acid biosynthesis; L-methionine biosynthesis via de novo pathway; L-homoserine from L-aspartate: step 2/3. The protein operates within amino-acid biosynthesis; L-threonine biosynthesis; L-threonine from L-aspartate: step 2/5. In terms of biological role, catalyzes the NADPH-dependent formation of L-aspartate-semialdehyde (L-ASA) by the reductive dephosphorylation of L-aspartyl-4-phosphate. This Helicobacter pylori (strain J99 / ATCC 700824) (Campylobacter pylori J99) protein is Aspartate-semialdehyde dehydrogenase.